Consider the following 361-residue polypeptide: Uroporphyrinogen decarboxylase (361 aa).

Substrate is bound by residues 27–31 (RQAGR), Asp77, Tyr154, Thr209, and His327.

This sequence belongs to the uroporphyrinogen decarboxylase family. As to quaternary structure, homodimer.

Its subcellular location is the cytoplasm. The enzyme catalyses uroporphyrinogen III + 4 H(+) = coproporphyrinogen III + 4 CO2. The protein operates within porphyrin-containing compound metabolism; protoporphyrin-IX biosynthesis; coproporphyrinogen-III from 5-aminolevulinate: step 4/4. Its function is as follows. Catalyzes the decarboxylation of four acetate groups of uroporphyrinogen-III to yield coproporphyrinogen-III. This chain is Uroporphyrinogen decarboxylase, found in Coxiella burnetii (strain Dugway 5J108-111).